A 92-amino-acid polypeptide reads, in one-letter code: MPRSLKKGPFIDLHLLKKVEKAMEAGDKKPIKTWSRRSMIIPNMIGLTIAVHNGRQHVPVFVTDEMIGHKLGEFSPTRTYRGHAADKKAKKR.

This sequence belongs to the universal ribosomal protein uS19 family.

Functionally, protein S19 forms a complex with S13 that binds strongly to the 16S ribosomal RNA. The protein is Small ribosomal subunit protein uS19 of Shewanella putrefaciens (strain CN-32 / ATCC BAA-453).